Here is a 430-residue protein sequence, read N- to C-terminus: Zinc carboxypeptidase A 1 (430 aa).

A signal peptide spans 1-22 (MSLNKCLLFALLAIVASASVSA). Residues 124 to 423 (QYYELDDTYA…DSIVAMATEV (300 aa)) form the Peptidase M14 domain. Positions 187 and 190 each coordinate Zn(2+). A disulfide bridge connects residues C252 and C275. H311 is a Zn(2+) binding site. The active-site Proton donor/acceptor is the E386.

The protein belongs to the peptidase M14 family. It depends on Zn(2+) as a cofactor.

It is found in the secreted. The protein is Zinc carboxypeptidase A 1 of Drosophila melanogaster (Fruit fly).